Consider the following 274-residue polypeptide: Protein RecA (274 aa).

An ATP-binding site is contributed by 43-50; that stretch reads GPESSGKT.

Belongs to the RecA family.

It localises to the cytoplasm. Can catalyze the hydrolysis of ATP in the presence of single-stranded DNA, the ATP-dependent uptake of single-stranded DNA by duplex DNA, and the ATP-dependent hybridization of homologous single-stranded DNAs. It interacts with LexA causing its activation and leading to its autocatalytic cleavage. This Neisseria mucosa protein is Protein RecA.